The chain runs to 238 residues: Pre-protein VI (238 aa).

Residues 1-33 (MDAVNFSILAPRYGSHPMMSAWSGIGTSDMNGG) constitute a propeptide that is removed on maturation. Residues 34-54 (AFNWGGIWSGIKNFGSNVKNW) form an amphipathic alpha-helix essential for membrane lytic activity region. The interval 36-53 (NWGGIWSGIKNFGSNVKN) is involved in endosomal membrane lysis. Residues 48–74 (GSNVKNWGSRAWNSQTGKLLRQKLNDT) are interaction with hexon protein. A Nuclear export signal motif is present at residues 67 to 76 (LRQKLNDTKV). The PPXY motif signature appears at 153–156 (PPSY). A disordered region spans residues 187-212 (TLELKPSDQPPPYSPQSSNMPVTAPV). The short motif at 219 to 230 (GTLANIVGVGLS) is the Nuclear export signal element. Positions 221–227 (LANIVGV) are interaction with hexon protein. The binds to importin alpha/beta, involved in hexon nuclear import stretch occupies residues 228-238 (GLSNVKRRRCF). A Nuclear localization signal motif is present at residues 233 to 236 (KRRR).

It belongs to the adenoviridae protein VI family. In terms of assembly, interacts with hexon protein; this interaction allows nuclear import of hexon trimers and possibly pre-capsid assembly. Interacts (via C-terminal NLS) with importin alpha/beta. As to quaternary structure, interacts (via PPxY motif) with host NEDD4 ubiquitine ligase; this interaction might play a role in virus intracellular transport during entry. Part of a complex composed of the core-capsid bridging protein, the endosome lysis protein VI and the hexon-linking protein VIII; these interactions bridge the virus core to the capsid. Interacts with peripentonal hexons; this interaction stabilizes the capsid by gluing two peripentonal hexons together and joining them with an adjacent group-of-nine hexon. Heterodimer with the viral protease; disulfide-linked. Interacts with the viral protease. Ubiquitinated by Nedd4 following partial capsid disassembly; which might play a role in intracellular virus movement during entry. In terms of processing, contains the major nuclear import and export signals. Proteolytically removed during virion maturation. The processing of the C-terminus turns the precursor into a mature viral structural protein and abrogates its ability to promote hexon import and act as a potential chaperone protein.

The protein resides in the host nucleus. Its subcellular location is the host cytoplasm. It is found in the virion. Its function is as follows. During virus assembly, promotes hexon trimers nuclear import through nuclear pore complexes via an importin alpha/beta-dependent mechanism. By analogy to herpesviruses capsid assembly, might act as a chaperone to promote the formation of the icosahedral capsid. In terms of biological role, structural component of the virion that provides increased stability to the particle shell through its interaction with the core-capsid bridging protein and the hexon-linking protein VIII. Fibers shedding during virus entry into host cell allows the endosome lysis protein to be exposed as a membrane-lytic peptide. Exhibits pH-independent membrane fragmentation activity and probably mediates viral rapid escape from host endosome via organellar membrane lysis. It is not clear if it then remains partially associated with the capsid and involved in the intracellular microtubule-dependent transport of capsid to the nucleus, or if it is lost during endosomal penetration. Functionally, cofactor that activates the viral protease. Binds to viral protease in a 1:1 ratio. This is Pre-protein VI from Canis lupus familiaris (Dog).